A 164-amino-acid polypeptide reads, in one-letter code: Transcription antitermination protein NusB (164 aa).

It belongs to the NusB family.

Functionally, involved in transcription antitermination. Required for transcription of ribosomal RNA (rRNA) genes. Binds specifically to the boxA antiterminator sequence of the ribosomal RNA (rrn) operons. The polypeptide is Transcription antitermination protein NusB (Chlorobaculum parvum (strain DSM 263 / NCIMB 8327) (Chlorobium vibrioforme subsp. thiosulfatophilum)).